The sequence spans 384 residues: WAT1-related protein At4g08290 (384 aa).

10 consecutive transmembrane segments (helical) span residues 15 to 35 (LLMIFLQFGAAGTYIVIMATL), 43 to 63 (VVIVYRNLVAALVLAPFALIF), 73 to 93 (LSVLWKIMALGFLEPVLDQGF), 104 to 124 (TYTSAIMNILPSVTFIIAWIL), 140 to 160 (IIGTLVGLGGALVMTLYKGPL), 186 to 206 (WVVGTLLILLGCVAWSGFYVL), 219 to 239 (SLSALICLAGAVQSFAVALVV), 255 to 275 (FAPLYTGIVSSGITYYVQGMV), 282 to 302 (VFVTAFNPLCMILVALIASFI), and 307 to 327 (IHFGCVIGGAVIAAGLYMVVW). 2 EamA domains span residues 25–154 (AGTY…LVMT) and 198–326 (VAWS…YMVV).

It belongs to the drug/metabolite transporter (DMT) superfamily. Plant drug/metabolite exporter (P-DME) (TC 2.A.7.4) family.

It localises to the membrane. The chain is WAT1-related protein At4g08290 from Arabidopsis thaliana (Mouse-ear cress).